The primary structure comprises 224 residues: Elongation factor Ts (224 aa).

The tract at residues 81-84 is involved in Mg(2+) ion dislocation from EF-Tu; the sequence is TDFV.

Belongs to the EF-Ts family.

It localises to the cytoplasm. Associates with the EF-Tu.GDP complex and induces the exchange of GDP to GTP. It remains bound to the aminoacyl-tRNA.EF-Tu.GTP complex up to the GTP hydrolysis stage on the ribosome. In Finegoldia magna (strain ATCC 29328 / DSM 20472 / WAL 2508) (Peptostreptococcus magnus), this protein is Elongation factor Ts.